The primary structure comprises 99 residues: Protein Frey (99 aa).

Residues 13–29 (AGLSLFALYLVLAAALL) traverse the membrane as a helical segment. The segment at 64 to 90 (RPKHPWPRGPRPLLSRAQQRKRDGPDM) is disordered.

As to quaternary structure, interacts with SPPL2C (via active sites); the interaction stabilizes FREY1 protein and inhibits SPPL2C proteolytic activity. Interacts with IZUMO1; the interaction retains IZUMO1 at the endoplasmic reticulum membrane and coordinates IZUMO1 complex assembly.

It is found in the endoplasmic reticulum membrane. Functionally, key regulator for male fertility expressed transiently in round spermatids where it recruits IZUMO1 at the endoplasmic reticulum (ER) membrane and coordinates the oolemmal binding multimeric complex (IZUMO1 complex) assembly. Upon complete assembly of the IZUMO1 complex, its ER retention is released, facilitating IZUMO1 complex export to the acrosome. Through the interaction with SPPL2C, inhibits its intramembrane protease activity directly accessing the catalytic center of an I-CLiP. The polypeptide is Protein Frey (FREY1) (Bos taurus (Bovine)).